The primary structure comprises 349 residues: DNA replication and repair protein RecF (349 aa).

Position 30–37 (30–37 (GKNGSGKT)) interacts with ATP.

It belongs to the RecF family.

It localises to the cytoplasm. Functionally, the RecF protein is involved in DNA metabolism; it is required for DNA replication and normal SOS inducibility. RecF binds preferentially to single-stranded, linear DNA. It also seems to bind ATP. The chain is DNA replication and repair protein RecF from Francisella tularensis subsp. holarctica (strain FTNF002-00 / FTA).